Consider the following 65-residue polypeptide: uncharacterized protein (65 aa).

This is an uncharacterized protein from Rickettsia conorii (strain ATCC VR-613 / Malish 7).